A 309-amino-acid polypeptide reads, in one-letter code: L-aminoadipate-semialdehyde dehydrogenase-phosphopantetheinyl transferase (309 aa).

CoA-binding positions include R47, R86 to K91, and N108 to H111. Residues D129 and E181 each coordinate Mg(2+). E181–K185 serves as a coordination point for CoA.

Belongs to the P-Pant transferase superfamily. AcpS family. In terms of assembly, monomer. Mg(2+) is required as a cofactor.

It is found in the cytoplasm. Its subcellular location is the cytosol. The enzyme catalyses apo-[ACP] + CoA = holo-[ACP] + adenosine 3',5'-bisphosphate + H(+). It carries out the reaction apo-[ACP] + acetyl-CoA = acetyl-[ACP] + adenosine 3',5'-bisphosphate + H(+). In terms of biological role, catalyzes the post-translational modification of target proteins by phosphopantetheine. Can transfer the 4'-phosphopantetheine moiety from coenzyme A, regardless of whether the CoA is presented in the free thiol form or as an acetyl thioester, to a serine residue of a broad range of acceptors including the acyl carrier domain of FASN. The sequence is that of L-aminoadipate-semialdehyde dehydrogenase-phosphopantetheinyl transferase (Aasdhppt) from Rattus norvegicus (Rat).